We begin with the raw amino-acid sequence, 174 residues long: Putative FAS1 domain-containing protein 096L (174 aa).

Residues 36-171 (PDTLWSKLNE…GIIHLMEEVY (136 aa)) form the FAS1 domain.

The sequence is that of Putative FAS1 domain-containing protein 096L from Acheta domesticus (House cricket).